Reading from the N-terminus, the 537-residue chain is MQKQWWHKATIYQIYPRSFKDTSGNGIGDLKGITSQLDYLQKLGITAIWLSPVYQSPMDDNGYDISDYEAIAEVFGNMDDMDDLLAAANERGIKIIMDLVVNHTSDEHAWFVEARENPNSPERDYYIWRDEPNNLMSIFSGSAWELDEASGQYYLHLFSKKQPDLNWENAHVRQKIYDMMNFWIAKGIGGFRMDVIDLIGKIPDSEITGNGPRLHDYLKEMNQATFGNHDVMTVGETWGATPEIARQYSRPENKELSMVFQFEHVGLQHKPNAPKWDYAEELDVPALKTIFSKWQTELKLGEGWNSLFWNNHDLPRVLSIWGNDSIYREKSAKALAILLHLMRGTPYIYQGEEIGMTNYPFKDLTEVDDIESLNYAKEAMENGVPAARVMSSIRKVGRDNARTPMQWSKDTHAGFSEAQETWLPVNPNYQEINVADALANQDSIFYTYQQLIALRKDQDWLVEADYHLLPTADKVFAYQRQFGEETYVIVVNVSDQEQVFAKDLAGAEVVITNTDVDKVLETKHLQPWDAFCVKLSV.

Aspartate 194 (nucleophile) is an active-site residue. The active-site Proton donor is the glutamate 236.

Belongs to the glycosyl hydrolase 13 family.

Its subcellular location is the cytoplasm. It carries out the reaction Hydrolysis of (1-&gt;6)-alpha-D-glucosidic linkages in (1-&gt;6)-alpha-D-glucans and derived oligosaccharides.. In terms of biological role, the physiological substrates may be short isomaltosaccharides. This is Glucan 1,6-alpha-glucosidase (dexB) from Streptococcus dysgalactiae subsp. equisimilis (Streptococcus equisimilis).